The chain runs to 329 residues: Fructose-1,6-bisphosphatase class 1 (329 aa).

4 residues coordinate Mg(2+): E84, D103, L105, and D106. Substrate is bound by residues 106–109, N196, and K262; that span reads DGSS. E268 lines the Mg(2+) pocket.

This sequence belongs to the FBPase class 1 family. As to quaternary structure, homotetramer. Mg(2+) serves as cofactor.

The protein localises to the cytoplasm. It catalyses the reaction beta-D-fructose 1,6-bisphosphate + H2O = beta-D-fructose 6-phosphate + phosphate. Its pathway is carbohydrate biosynthesis; gluconeogenesis. The sequence is that of Fructose-1,6-bisphosphatase class 1 from Shewanella woodyi (strain ATCC 51908 / MS32).